We begin with the raw amino-acid sequence, 432 residues long: Enolase (432 aa).

Gln-167 contacts (2R)-2-phosphoglycerate. Glu-209 (proton donor) is an active-site residue. Mg(2+) is bound by residues Asp-246, Glu-291, and Asp-318. (2R)-2-phosphoglycerate is bound by residues Lys-343, Arg-372, Ser-373, and Lys-394. Catalysis depends on Lys-343, which acts as the Proton acceptor.

The protein belongs to the enolase family. In terms of assembly, component of the RNA degradosome, a multiprotein complex involved in RNA processing and mRNA degradation. Requires Mg(2+) as cofactor.

It is found in the cytoplasm. Its subcellular location is the secreted. The protein resides in the cell surface. The catalysed reaction is (2R)-2-phosphoglycerate = phosphoenolpyruvate + H2O. The protein operates within carbohydrate degradation; glycolysis; pyruvate from D-glyceraldehyde 3-phosphate: step 4/5. Functionally, catalyzes the reversible conversion of 2-phosphoglycerate (2-PG) into phosphoenolpyruvate (PEP). It is essential for the degradation of carbohydrates via glycolysis. This chain is Enolase, found in Colwellia psychrerythraea (strain 34H / ATCC BAA-681) (Vibrio psychroerythus).